The primary structure comprises 269 residues: Tryptophan synthase alpha chain (269 aa).

Active-site proton acceptor residues include E49 and D60.

This sequence belongs to the TrpA family. Tetramer of two alpha and two beta chains.

It carries out the reaction (1S,2R)-1-C-(indol-3-yl)glycerol 3-phosphate + L-serine = D-glyceraldehyde 3-phosphate + L-tryptophan + H2O. Its pathway is amino-acid biosynthesis; L-tryptophan biosynthesis; L-tryptophan from chorismate: step 5/5. Its function is as follows. The alpha subunit is responsible for the aldol cleavage of indoleglycerol phosphate to indole and glyceraldehyde 3-phosphate. This is Tryptophan synthase alpha chain from Actinobacillus succinogenes (strain ATCC 55618 / DSM 22257 / CCUG 43843 / 130Z).